Consider the following 346-residue polypeptide: Phenylalanine--tRNA ligase alpha subunit (346 aa).

Glu259 is a binding site for Mg(2+).

This sequence belongs to the class-II aminoacyl-tRNA synthetase family. Phe-tRNA synthetase alpha subunit type 1 subfamily. Tetramer of two alpha and two beta subunits. Mg(2+) serves as cofactor.

Its subcellular location is the cytoplasm. The catalysed reaction is tRNA(Phe) + L-phenylalanine + ATP = L-phenylalanyl-tRNA(Phe) + AMP + diphosphate + H(+). The sequence is that of Phenylalanine--tRNA ligase alpha subunit from Lactococcus lactis subsp. lactis (strain IL1403) (Streptococcus lactis).